The chain runs to 344 residues: Glycerol-3-phosphate dehydrogenase [NAD(P)+] (344 aa).

NADPH contacts are provided by tryptophan 11, arginine 31, arginine 32, and lysine 105. Residues lysine 105, glycine 133, and serine 135 each contribute to the sn-glycerol 3-phosphate site. Residue alanine 137 coordinates NADPH. Positions 188, 241, 251, 252, and 253 each coordinate sn-glycerol 3-phosphate. The Proton acceptor role is filled by lysine 188. Arginine 252 is an NADPH binding site. NADPH is bound at residue glutamate 278.

Belongs to the NAD-dependent glycerol-3-phosphate dehydrogenase family.

The protein resides in the cytoplasm. The enzyme catalyses sn-glycerol 3-phosphate + NAD(+) = dihydroxyacetone phosphate + NADH + H(+). It catalyses the reaction sn-glycerol 3-phosphate + NADP(+) = dihydroxyacetone phosphate + NADPH + H(+). The protein operates within membrane lipid metabolism; glycerophospholipid metabolism. Its function is as follows. Catalyzes the reduction of the glycolytic intermediate dihydroxyacetone phosphate (DHAP) to sn-glycerol 3-phosphate (G3P), the key precursor for phospholipid synthesis. The sequence is that of Glycerol-3-phosphate dehydrogenase [NAD(P)+] from Acidithiobacillus ferrooxidans (strain ATCC 23270 / DSM 14882 / CIP 104768 / NCIMB 8455) (Ferrobacillus ferrooxidans (strain ATCC 23270)).